The primary structure comprises 238 residues: Ubiquinone biosynthesis O-methyltransferase (238 aa).

S-adenosyl-L-methionine is bound by residues R38, G58, D79, and M124.

Belongs to the methyltransferase superfamily. UbiG/COQ3 family.

It carries out the reaction a 3-demethylubiquinol + S-adenosyl-L-methionine = a ubiquinol + S-adenosyl-L-homocysteine + H(+). The catalysed reaction is a 3-(all-trans-polyprenyl)benzene-1,2-diol + S-adenosyl-L-methionine = a 2-methoxy-6-(all-trans-polyprenyl)phenol + S-adenosyl-L-homocysteine + H(+). It functions in the pathway cofactor biosynthesis; ubiquinone biosynthesis. Its function is as follows. O-methyltransferase that catalyzes the 2 O-methylation steps in the ubiquinone biosynthetic pathway. This Acinetobacter baylyi (strain ATCC 33305 / BD413 / ADP1) protein is Ubiquinone biosynthesis O-methyltransferase.